Consider the following 350-residue polypeptide: Ornithine cyclodeaminase (350 aa).

L-ornithine is bound by residues Arg-45 and Lys-69. NAD(+) is bound by residues Thr-84, Arg-112, 139-140 (AQ), Asp-161, Thr-202, 225-228 (VGGD), Lys-232, and Ser-293. Residue Arg-112 participates in L-ornithine binding. Position 228 (Asp-228) interacts with L-ornithine. Residue Asp-228 is the Proton donor/acceptor of the active site. Residue Val-294 participates in L-ornithine binding. NAD(+) is bound at residue Lys-331.

Belongs to the ornithine cyclodeaminase/mu-crystallin family. Homodimer. NAD(+) is required as a cofactor.

It carries out the reaction L-ornithine = L-proline + NH4(+). The protein operates within amino-acid biosynthesis; L-proline biosynthesis; L-proline from L-ornithine: step 1/1. In terms of biological role, catalyzes the conversion of L-ornithine into L-proline with release of ammonia. Is likely involved in the L-ornithine degradation pathway that allows P.putida to utilize this compound as sole carbon and nitrogen source. This Pseudomonas putida (strain ATCC 47054 / DSM 6125 / CFBP 8728 / NCIMB 11950 / KT2440) protein is Ornithine cyclodeaminase.